Here is a 239-residue protein sequence, read N- to C-terminus: LexA repressor (239 aa).

A DNA-binding region (H-T-H motif) is located at residues 26–46 (FDEMKEALDLASKSGIHRLIT). Positions 90 to 110 (GSLGKTPPPPARPAPVATNDD) are disordered. Catalysis depends on for autocatalytic cleavage activity residues Ser-160 and Lys-198.

Belongs to the peptidase S24 family. Homodimer.

It catalyses the reaction Hydrolysis of Ala-|-Gly bond in repressor LexA.. In terms of biological role, represses a number of genes involved in the response to DNA damage (SOS response), including recA and lexA. In the presence of single-stranded DNA, RecA interacts with LexA causing an autocatalytic cleavage which disrupts the DNA-binding part of LexA, leading to derepression of the SOS regulon and eventually DNA repair. The polypeptide is LexA repressor (Brucella anthropi (strain ATCC 49188 / DSM 6882 / CCUG 24695 / JCM 21032 / LMG 3331 / NBRC 15819 / NCTC 12168 / Alc 37) (Ochrobactrum anthropi)).